A 187-amino-acid chain; its full sequence is Adenine phosphoribosyltransferase (187 aa).

It belongs to the purine/pyrimidine phosphoribosyltransferase family. In terms of assembly, homodimer.

It localises to the cytoplasm. It catalyses the reaction AMP + diphosphate = 5-phospho-alpha-D-ribose 1-diphosphate + adenine. Its pathway is purine metabolism; AMP biosynthesis via salvage pathway; AMP from adenine: step 1/1. Catalyzes a salvage reaction resulting in the formation of AMP, that is energically less costly than de novo synthesis. This is Adenine phosphoribosyltransferase from Yersinia pseudotuberculosis serotype O:3 (strain YPIII).